The primary structure comprises 114 residues: Replication initiation control protein YabA (114 aa).

Zn(2+)-binding residues include His79, Cys81, Cys95, and Cys98.

Belongs to the YabA family. Homotetramer. Interacts with both DnaA and DnaN, acting as a bridge between these two proteins. Requires Zn(2+) as cofactor.

Its subcellular location is the cytoplasm. It localises to the nucleoid. Involved in control of chromosome replication initiation. Inhibits the cooperative binding of DnaA to the oriC region, thus negatively regulating initiation of chromosome replication. Inhibits the ability of DnaA-ATP to form a helix on DNA; does not disassemble preformed DnaA-DNA helices. Decreases the residence time of DnaA on the chromosome at its binding sites (oriC, replication forks and promoter-binding sites). Tethers DnaA to the replication machinery via the DNA polymerase beta sliding clamp subunit (dnaN). Associates with oriC and other DnaA targets on the chromosome in a DnaA-dependent manner. The sequence is that of Replication initiation control protein YabA from Lactobacillus gasseri (strain ATCC 33323 / DSM 20243 / BCRC 14619 / CIP 102991 / JCM 1131 / KCTC 3163 / NCIMB 11718 / NCTC 13722 / AM63).